The following is a 350-amino-acid chain: S-adenosylmethionine:tRNA ribosyltransferase-isomerase (350 aa).

The protein belongs to the QueA family. As to quaternary structure, monomer.

The protein localises to the cytoplasm. It carries out the reaction 7-aminomethyl-7-carbaguanosine(34) in tRNA + S-adenosyl-L-methionine = epoxyqueuosine(34) in tRNA + adenine + L-methionine + 2 H(+). Its pathway is tRNA modification; tRNA-queuosine biosynthesis. In terms of biological role, transfers and isomerizes the ribose moiety from AdoMet to the 7-aminomethyl group of 7-deazaguanine (preQ1-tRNA) to give epoxyqueuosine (oQ-tRNA). The protein is S-adenosylmethionine:tRNA ribosyltransferase-isomerase of Bacillus cereus (strain ZK / E33L).